The primary structure comprises 186 residues: Peptide deformylase (186 aa).

Residues Cys99 and His141 each coordinate Fe cation. Residue Glu142 is part of the active site. His145 is a Fe cation binding site.

The protein belongs to the polypeptide deformylase family. It depends on Fe(2+) as a cofactor.

It carries out the reaction N-terminal N-formyl-L-methionyl-[peptide] + H2O = N-terminal L-methionyl-[peptide] + formate. In terms of biological role, removes the formyl group from the N-terminal Met of newly synthesized proteins. Requires at least a dipeptide for an efficient rate of reaction. N-terminal L-methionine is a prerequisite for activity but the enzyme has broad specificity at other positions. This is Peptide deformylase from Chlamydia caviae (strain ATCC VR-813 / DSM 19441 / 03DC25 / GPIC) (Chlamydophila caviae).